Consider the following 430-residue polypeptide: Xaa-Pro aminopeptidase (430 aa).

Mn(2+) contacts are provided by D254, D265, H348, E377, and E400.

Belongs to the peptidase M24B family. As to quaternary structure, homotetramer. Requires Mn(2+) as cofactor.

The catalysed reaction is Release of any N-terminal amino acid, including proline, that is linked to proline, even from a dipeptide or tripeptide.. The protein is Xaa-Pro aminopeptidase (pepP) of Haemophilus influenzae (strain ATCC 51907 / DSM 11121 / KW20 / Rd).